Here is an 80-residue protein sequence, read N- to C-terminus: Exodeoxyribonuclease 7 small subunit (80 aa).

The protein belongs to the XseB family. In terms of assembly, heterooligomer composed of large and small subunits.

The protein localises to the cytoplasm. It catalyses the reaction Exonucleolytic cleavage in either 5'- to 3'- or 3'- to 5'-direction to yield nucleoside 5'-phosphates.. Functionally, bidirectionally degrades single-stranded DNA into large acid-insoluble oligonucleotides, which are then degraded further into small acid-soluble oligonucleotides. This chain is Exodeoxyribonuclease 7 small subunit, found in Cronobacter sakazakii (strain ATCC BAA-894) (Enterobacter sakazakii).